The following is a 326-amino-acid chain: Holliday junction branch migration complex subunit RuvB (326 aa).

The interval 1–180 is large ATPase domain (RuvB-L); the sequence is MKSISCGKEY…FGIPLHLEFY (180 aa). ATP contacts are provided by residues Ile19, Arg20, Gly61, Lys64, Thr65, Thr66, 127–129, Arg170, Tyr180, and Arg217; that span reads EDF. Thr65 lines the Mg(2+) pocket. Positions 181–251 are small ATPAse domain (RuvB-S); sequence SFEELVNIIK…VADSVLLKLG (71 aa). The segment at 254-326 is head domain (RuvB-H); it reads KMGLNKLDMN…QAKEYLSFQH (73 aa). 2 residues coordinate DNA: Arg307 and Arg312.

This sequence belongs to the RuvB family. In terms of assembly, homohexamer. Forms an RuvA(8)-RuvB(12)-Holliday junction (HJ) complex. HJ DNA is sandwiched between 2 RuvA tetramers; dsDNA enters through RuvA and exits via RuvB. An RuvB hexamer assembles on each DNA strand where it exits the tetramer. Each RuvB hexamer is contacted by two RuvA subunits (via domain III) on 2 adjacent RuvB subunits; this complex drives branch migration. In the full resolvosome a probable DNA-RuvA(4)-RuvB(12)-RuvC(2) complex forms which resolves the HJ.

The protein localises to the cytoplasm. It carries out the reaction ATP + H2O = ADP + phosphate + H(+). Functionally, the RuvA-RuvB-RuvC complex processes Holliday junction (HJ) DNA during genetic recombination and DNA repair, while the RuvA-RuvB complex plays an important role in the rescue of blocked DNA replication forks via replication fork reversal (RFR). RuvA specifically binds to HJ cruciform DNA, conferring on it an open structure. The RuvB hexamer acts as an ATP-dependent pump, pulling dsDNA into and through the RuvAB complex. RuvB forms 2 homohexamers on either side of HJ DNA bound by 1 or 2 RuvA tetramers; 4 subunits per hexamer contact DNA at a time. Coordinated motions by a converter formed by DNA-disengaged RuvB subunits stimulates ATP hydrolysis and nucleotide exchange. Immobilization of the converter enables RuvB to convert the ATP-contained energy into a lever motion, pulling 2 nucleotides of DNA out of the RuvA tetramer per ATP hydrolyzed, thus driving DNA branch migration. The RuvB motors rotate together with the DNA substrate, which together with the progressing nucleotide cycle form the mechanistic basis for DNA recombination by continuous HJ branch migration. Branch migration allows RuvC to scan DNA until it finds its consensus sequence, where it cleaves and resolves cruciform DNA. This Wolbachia pipientis wMel protein is Holliday junction branch migration complex subunit RuvB.